A 232-amino-acid polypeptide reads, in one-letter code: Thiamine import ATP-binding protein ThiQ (232 aa).

The 229-residue stretch at 2 to 230 folds into the ABC transporter domain; the sequence is LKLTDITWLY…KASASALLGI (229 aa). ATP is bound at residue 32-39; it reads GPSGAGKS.

It belongs to the ABC transporter superfamily. Thiamine importer (TC 3.A.1.19.1) family. In terms of assembly, the complex is composed of two ATP-binding proteins (ThiQ), two transmembrane proteins (ThiP) and a solute-binding protein (ThiB).

The protein resides in the cell inner membrane. The enzyme catalyses thiamine(out) + ATP + H2O = thiamine(in) + ADP + phosphate + H(+). Its function is as follows. Part of the ABC transporter complex ThiBPQ involved in thiamine import. Responsible for energy coupling to the transport system. The sequence is that of Thiamine import ATP-binding protein ThiQ from Escherichia coli O157:H7.